We begin with the raw amino-acid sequence, 100 residues long: Large ribosomal subunit protein uL23 (100 aa).

It belongs to the universal ribosomal protein uL23 family. In terms of assembly, part of the 50S ribosomal subunit. Contacts protein L29, and trigger factor when it is bound to the ribosome.

In terms of biological role, one of the early assembly proteins it binds 23S rRNA. One of the proteins that surrounds the polypeptide exit tunnel on the outside of the ribosome. Forms the main docking site for trigger factor binding to the ribosome. The chain is Large ribosomal subunit protein uL23 from Aeromonas salmonicida (strain A449).